Consider the following 603-residue polypeptide: Sabinene hydrate synthase, chloroplastic (603 aa).

A chloroplast-targeting transit peptide spans 1–47 (MSTISINHVGLLRNPLHGKSKRASINKSWSLCLPRSSSASRLVKPCR). Residues aspartate 357 and aspartate 361 each coordinate Mn(2+). The DDXXD motif signature appears at 357–361 (DDVYD). Homodimerization stretches follow at residues 363 to 369 (YGTLDEL) and 435 to 472 (EAEW…VSIP). Mn(2+)-binding residues include aspartate 501 and glutamate 509.

It belongs to the terpene synthase family. In terms of assembly, homodimer. Requires Mn(2+) as cofactor. Mg(2+) serves as cofactor.

It is found in the plastid. The protein resides in the chloroplast. The enzyme catalyses (2E)-geranyl diphosphate + H2O = sabinene hydrate + diphosphate. Its pathway is secondary metabolite biosynthesis; terpenoid biosynthesis. Functionally, involved in the biosynthesis of phenolic monoterpenes natural products. Monoterpene synthase which catalyzes the conversion of geranyl diphosphate (GPP) to sabinene hydrate, mainly (Z)-sabinene hydrate and to a lower extent (E)-sabinene hydrate, and the formation of minor amounts and traces of several other monoterpenes (e.g. mainly alpha-thujene, alpha-pinene and myrcene). This chain is Sabinene hydrate synthase, chloroplastic, found in Thymus vulgaris (Thyme).